We begin with the raw amino-acid sequence, 224 residues long: Histone H1.03 (224 aa).

Low complexity-rich tracts occupy residues Met1 to Ala22 and Ala30 to Pro42. Disordered stretches follow at residues Met1–Ser43 and Gln99–Lys224. Residues Ala40–Lys113 enclose the H15 domain. Composition is skewed to basic residues over residues Ala122 to Ala137, Lys145 to Lys162, Lys170 to Val188, and Lys197 to Lys224.

Belongs to the histone H1/H5 family.

It is found in the nucleus. The protein resides in the chromosome. Functionally, histones H1 are necessary for the condensation of nucleosome chains into higher-order structures. This chain is Histone H1.03, found in Gallus gallus (Chicken).